The primary structure comprises 507 residues: ATP synthase subunit alpha, chloroplastic (507 aa).

170 to 177 (GDRQTGKT) provides a ligand contact to ATP.

It belongs to the ATPase alpha/beta chains family. F-type ATPases have 2 components, CF(1) - the catalytic core - and CF(0) - the membrane proton channel. CF(1) has five subunits: alpha(3), beta(3), gamma(1), delta(1), epsilon(1). CF(0) has four main subunits: a, b, b' and c.

The protein localises to the plastid. The protein resides in the chloroplast thylakoid membrane. The enzyme catalyses ATP + H2O + 4 H(+)(in) = ADP + phosphate + 5 H(+)(out). Functionally, produces ATP from ADP in the presence of a proton gradient across the membrane. The alpha chain is a regulatory subunit. This chain is ATP synthase subunit alpha, chloroplastic, found in Citrus sinensis (Sweet orange).